A 265-amino-acid polypeptide reads, in one-letter code: tRNA (guanine-N(7)-)-methyltransferase (265 aa).

The tract at residues 1–40 (MIHDDDPNAPGAPHDDDATAAPASATRAAPAAGDDDDANP) is disordered. The segment covering 19 to 32 (TAAPASATRAAPAA) has biased composition (low complexity). Positions 95, 120, 147, and 170 each coordinate S-adenosyl-L-methionine. The active site involves D170. Substrate is bound by residues K174, D206, and 241–244 (TKFE).

Belongs to the class I-like SAM-binding methyltransferase superfamily. TrmB family.

It catalyses the reaction guanosine(46) in tRNA + S-adenosyl-L-methionine = N(7)-methylguanosine(46) in tRNA + S-adenosyl-L-homocysteine. It participates in tRNA modification; N(7)-methylguanine-tRNA biosynthesis. Functionally, catalyzes the formation of N(7)-methylguanine at position 46 (m7G46) in tRNA. The chain is tRNA (guanine-N(7)-)-methyltransferase from Burkholderia pseudomallei (strain 1710b).